A 1381-amino-acid chain; its full sequence is Serine-aspartate repeat-containing protein D (1381 aa).

The signal sequence occupies residues 1–35 (MLNRENKTAITRKGMVSNRLNKFSIRKYTVGTASI). The YSIRK-G/S signaling motif motif lies at 23 to 34 (FSIRKYTVGTAS). A ligand binding A region region spans residues 36–568 (LVGTTLIFGL…NNQSGGAGQE (533 aa)). The segment at 54–185 (ESTNKELNEA…NKKVDAKTES (132 aa)) is disordered. Composition is skewed to polar residues over residues 62–71 (EATTSASDNQ) and 94–108 (EMVS…SNGN). Basic and acidic residues predominate over residues 130 to 145 (KSDEQASPKSTNEDLN). Composition is skewed to polar residues over residues 146–155 (TKQTISNQEA) and 163–173 (NKSVVNVQPTN). A compositionally biased stretch (basic and acidic residues) spans 174-183 (EENKKVDAKT). CNA-B domains lie at 569 to 680 (VYKI…IYKP), 681 to 791 (KYNL…YKTP), 792 to 901 (KYNL…FYKP), 902 to 1012 (TYNL…YKTP), and 1013 to 1123 (KYSL…EEET). 3 disordered regions span residues 857 to 883 (ETPS…TSTT), 972 to 992 (YTPT…GLTT), and 1078 to 1357 (EKPA…SNNA). Composition is skewed to polar residues over residues 860–869 (SGYTPTQVGS) and 972–981 (YTPTSVTSGN). Composition is skewed to acidic residues over residues 1091–1101 (TEDDKDADGGE), 1118–1134 (YYEE…DSDS), 1142–1164 (SDSD…DSDS), and 1172–1320 (SDSD…DSDS). Residues 1344-1348 (LPETG) carry the LPXTG sorting signal motif. T1347 bears the Pentaglycyl murein peptidoglycan amidated threonine mark. Positions 1348–1381 (GNENSGSNNATLFGGLFAALGSLLLFGRRKKQNK) are cleaved as a propeptide — removed by sortase.

This sequence belongs to the serine-aspartate repeat-containing protein (SDr) family. In terms of assembly, interacts with host DSG1; this interaction increases S.aureus adherence to keratinocytes.

Its subcellular location is the secreted. It localises to the cell wall. Cell surface-associated calcium-binding protein which plays an important role in adhesion and pathogenesis. Mediates interactions with components of the extracellular matrix such as host DSG1 to promote bacterial adhesion to host cells. Contributes to the resistance to killing by innate immune components such as neutrophils present in blood and thus attenuates bacterial clearance. The sequence is that of Serine-aspartate repeat-containing protein D (sdrD) from Staphylococcus aureus (strain USA300).